The chain runs to 162 residues: uncharacterized protein (162 aa).

The region spanning 78–154 (KNLVVVDIGA…KAIKNLHYVG (77 aa)) is the PUA domain.

This is an uncharacterized protein from Methanocaldococcus jannaschii (strain ATCC 43067 / DSM 2661 / JAL-1 / JCM 10045 / NBRC 100440) (Methanococcus jannaschii).